Consider the following 248-residue polypeptide: 1-(5-phosphoribosyl)-5-[(5-phosphoribosylamino)methylideneamino] imidazole-4-carboxamide isomerase (248 aa).

Residue Asp11 is the Proton acceptor of the active site. Catalysis depends on Asp132, which acts as the Proton donor.

The protein belongs to the HisA/HisF family.

It is found in the cytoplasm. It catalyses the reaction 1-(5-phospho-beta-D-ribosyl)-5-[(5-phospho-beta-D-ribosylamino)methylideneamino]imidazole-4-carboxamide = 5-[(5-phospho-1-deoxy-D-ribulos-1-ylimino)methylamino]-1-(5-phospho-beta-D-ribosyl)imidazole-4-carboxamide. It functions in the pathway amino-acid biosynthesis; L-histidine biosynthesis; L-histidine from 5-phospho-alpha-D-ribose 1-diphosphate: step 4/9. The sequence is that of 1-(5-phosphoribosyl)-5-[(5-phosphoribosylamino)methylideneamino] imidazole-4-carboxamide isomerase from Afipia carboxidovorans (strain ATCC 49405 / DSM 1227 / KCTC 32145 / OM5) (Oligotropha carboxidovorans).